The sequence spans 391 residues: ATP phosphoribosyltransferase regulatory subunit (391 aa).

It belongs to the class-II aminoacyl-tRNA synthetase family. HisZ subfamily. Heteromultimer composed of HisG and HisZ subunits.

It localises to the cytoplasm. Its pathway is amino-acid biosynthesis; L-histidine biosynthesis; L-histidine from 5-phospho-alpha-D-ribose 1-diphosphate: step 1/9. Functionally, required for the first step of histidine biosynthesis. May allow the feedback regulation of ATP phosphoribosyltransferase activity by histidine. The chain is ATP phosphoribosyltransferase regulatory subunit from Prochlorococcus marinus (strain NATL1A).